A 159-amino-acid chain; its full sequence is 17 kDa surface antigen (159 aa).

Residues 1–19 form the signal peptide; it reads MKLLSKIMIIALAASMLQA. A lipid anchor (N-palmitoyl cysteine) is attached at Cys20. Cys20 carries S-diacylglycerol cysteine lipidation.

This sequence belongs to the rickettsiale 17 kDa surface antigen family.

It is found in the cell outer membrane. This is 17 kDa surface antigen (omp) from Rickettsia prowazekii (strain Madrid E).